The primary structure comprises 548 residues: Poly(ADP-ribose) glycohydrolase 1 (548 aa).

It belongs to the poly(ADP-ribose) glycohydrolase family.

It carries out the reaction [(1''-&gt;2')-ADP-alpha-D-ribose](n) + H2O = [(1''-&gt;2')-ADP-alpha-D-ribose](n-1) + ADP-D-ribose. Functionally, poly(ADP-ribose) synthesized after DNA damage is only present transiently and is rapidly degraded by poly(ADP-ribose) glycohydrolase. Involved in establishing period length of the circadian oscillator. May regulate post-translational poly(ADP-ribosyl)ation of an oscillator component. This is Poly(ADP-ribose) glycohydrolase 1 (PARG1) from Arabidopsis thaliana (Mouse-ear cress).